Here is a 101-residue protein sequence, read N- to C-terminus: Small ribosomal subunit protein uS14 (101 aa).

The protein belongs to the universal ribosomal protein uS14 family. In terms of assembly, part of the 30S ribosomal subunit. Contacts proteins S3 and S10.

Its function is as follows. Binds 16S rRNA, required for the assembly of 30S particles and may also be responsible for determining the conformation of the 16S rRNA at the A site. The chain is Small ribosomal subunit protein uS14 from Stenotrophomonas maltophilia (strain K279a).